The following is a 34-amino-acid chain: Protamine-Y1/Y2 (34 aa).

Residues 1–34 (PRRRRQASRPVRRRRRYRRSTAARRRRRVVRRRR) form a disordered region.

As to expression, testis.

It localises to the nucleus. The protein localises to the chromosome. Protamines substitute for histones in the chromatin of sperm during the haploid phase of spermatogenesis. They compact sperm DNA into a highly condensed, stable and inactive complex. The chain is Protamine-Y1/Y2 from Thunnus thynnus (Atlantic bluefin tuna).